A 245-amino-acid chain; its full sequence is 7-cyano-7-deazaguanine synthase (245 aa).

19–29 (FSGGQDSATCL) serves as a coordination point for ATP. Zn(2+)-binding residues include Cys207, Cys222, Cys225, and Cys228.

This sequence belongs to the QueC family. It depends on Zn(2+) as a cofactor.

The enzyme catalyses 7-carboxy-7-deazaguanine + NH4(+) + ATP = 7-cyano-7-deazaguanine + ADP + phosphate + H2O + H(+). It participates in purine metabolism; 7-cyano-7-deazaguanine biosynthesis. Functionally, catalyzes the ATP-dependent conversion of 7-carboxy-7-deazaguanine (CDG) to 7-cyano-7-deazaguanine (preQ(0)). The polypeptide is 7-cyano-7-deazaguanine synthase (Gluconacetobacter diazotrophicus (strain ATCC 49037 / DSM 5601 / CCUG 37298 / CIP 103539 / LMG 7603 / PAl5)).